The following is a 338-amino-acid chain: MLVLGIETSCDETGVALYDTRRKLLGHALYSQVDMHRDYGGVVPELASRDHIRRVLPLVTQVLEQTNTSLETIDAIAYTQGPGLAGALLTGASISNALAFARNIPVLNIHHLEGHLLSPLLSDPAPDFPFVALLVSGGHTQLMHVKGIGQYKLLGETVDDAAGEAFDKTAKLLGLDYPGGKLLADLATQGQPGRFKLPRPMLNSDDLNFSFSGLKTAAALLINKQKANTQTRADIALAFEDAVTDVLVKKSIAALKITRLQQLVVAGGVGANSRLRQKLRHHLVGTGIAVFFPELEFCTDNGAMIALAGALRLQQLNEKPPGSDGSFTIKARWNLEDL.

Fe cation-binding residues include His111 and His115. Residues 134 to 138, Asp167, Gly180, and Asn272 contribute to the substrate site; that span reads LVSGG. Residue Asp300 participates in Fe cation binding.

This sequence belongs to the KAE1 / TsaD family. Requires Fe(2+) as cofactor.

It localises to the cytoplasm. It carries out the reaction L-threonylcarbamoyladenylate + adenosine(37) in tRNA = N(6)-L-threonylcarbamoyladenosine(37) in tRNA + AMP + H(+). Functionally, required for the formation of a threonylcarbamoyl group on adenosine at position 37 (t(6)A37) in tRNAs that read codons beginning with adenine. Is involved in the transfer of the threonylcarbamoyl moiety of threonylcarbamoyl-AMP (TC-AMP) to the N6 group of A37, together with TsaE and TsaB. TsaD likely plays a direct catalytic role in this reaction. The chain is tRNA N6-adenosine threonylcarbamoyltransferase from Nitrosomonas eutropha (strain DSM 101675 / C91 / Nm57).